Here is an 88-residue protein sequence, read N- to C-terminus: Small ribosomal subunit protein bS18 (88 aa).

The protein belongs to the bacterial ribosomal protein bS18 family. Part of the 30S ribosomal subunit. Forms a tight heterodimer with protein bS6.

Its function is as follows. Binds as a heterodimer with protein bS6 to the central domain of the 16S rRNA, where it helps stabilize the platform of the 30S subunit. The sequence is that of Small ribosomal subunit protein bS18 from Aliarcobacter butzleri (strain RM4018) (Arcobacter butzleri).